The chain runs to 965 residues: Fibronectin-binding protein A (965 aa).

The first 36 residues, M1–A36, serve as a signal peptide directing secretion. Residues Y7–S18 carry the YSIRK-G/S signaling motif motif. The tract at residues A37 to E206 is disordered. A ligand-binding A region region spans residues A37–Y514. Over residues E39–N55 the composition is skewed to polar residues. A compositionally biased stretch (low complexity) spans E59–Q74. Polar residues predominate over residues S75 to T92. Residues T112–A122 show a composition bias toward basic and acidic residues. Polar residues predominate over residues V126–Q139. A compositionally biased stretch (basic and acidic residues) spans D179–T193. The tract at residues G194–Y514 is fibrinogen/elastin/tropoelastin-binding. The interval G515 to T837 is fibronectin-binding. The stretch at E548–I577 is one B-1 repeat. Residues E548 to S607 form a 2 X approximate tandem repeats region. Residues E578–S607 form a B-2 repeat. Disordered regions lie at residues G598–H625, L743–I774, I794–V903, and V916–M942. One copy of the D-1; truncated repeat lies at G748 to G770. The tract at residues G748–P839 is 4 X approximate tandem repeats. Residues G771–H785 form a D-2; truncated repeat. Residues G786–S824 form a D-3 repeat. Positions I794–P803 are enriched in basic and acidic residues. Residues G825 to P839 form a D-4; truncated repeat. The span at P839–P885 shows a compositional bias: pro residues. 4 WR repeats span residues P840–T853, P854–K867, P868–K881, and P882–K895. Residues P840–K895 are 4 X tandem repeats, Pro-rich (WR). The LPXTG sorting signal motif lies at L929–G933. T932 is subject to Pentaglycyl murein peptidoglycan amidated threonine. Positions G933–A965 are cleaved as a propeptide — removed by sortase.

The protein localises to the secreted. It localises to the cell wall. Functionally, promotes bacterial attachment to multiple substrates, such as fibronectin (Fn), fibrinogen (Fg), elastin peptides and tropoelastin. This confers to S.aureus the ability to invade endothelial cells. Promotes adherence to and aggregation of activated platelets. The sequence is that of Fibronectin-binding protein A (fnbA) from Staphylococcus aureus (strain MRSA252).